We begin with the raw amino-acid sequence, 449 residues long: MLNYTGLENKNVLVVGLAKSGYEAAKLLSKLGANVTVNDGKDLSQDAHVKDLESMGISVVSGSHPLTLLDNNPIIVKNPGIPYTVSIIDEAVKRGLKILTEVELSYLISEAPIIAVTGTNGKTTVTSLIGDMFKKSRLTGRLSGNIGYVASKVAQEVKPTDYLVTELSSFQLLGIEKYKPHIAIITNIYSAHLDYHENLENYQNAKKQIYKNQTEEDYLICNYHQRQVIESEELKAKTLYFSTQQEVDGIYIKDGFIIYKGVRIINTEDLVLPGEHNLENILAAVLACILAGVPIKAIIDSLTTFSGIEHRLQYVGTNRTNKYYNDSKATNTLATQFALNSFNQPIIWLCGGLDRGNEFDELIPYMENVRAMVVFGQTKAKFAKLGNSQGKSVIEANNVEDAVDKVQDIIEPNDVVLLSPACASWDQYSTFEERGEKFIERFRAHLPSY.

ATP is bound at residue 118-124 (GTNGKTT).

It belongs to the MurCDEF family.

Its subcellular location is the cytoplasm. It carries out the reaction UDP-N-acetyl-alpha-D-muramoyl-L-alanine + D-glutamate + ATP = UDP-N-acetyl-alpha-D-muramoyl-L-alanyl-D-glutamate + ADP + phosphate + H(+). It participates in cell wall biogenesis; peptidoglycan biosynthesis. In terms of biological role, cell wall formation. Catalyzes the addition of glutamate to the nucleotide precursor UDP-N-acetylmuramoyl-L-alanine (UMA). This Staphylococcus aureus (strain MW2) protein is UDP-N-acetylmuramoylalanine--D-glutamate ligase.